A 240-amino-acid chain; its full sequence is Ribonuclease PH (240 aa).

Residues arginine 86 and glycine 124 to arginine 126 contribute to the phosphate site.

The protein belongs to the RNase PH family. As to quaternary structure, homohexameric ring arranged as a trimer of dimers.

The enzyme catalyses tRNA(n+1) + phosphate = tRNA(n) + a ribonucleoside 5'-diphosphate. Functionally, phosphorolytic 3'-5' exoribonuclease that plays an important role in tRNA 3'-end maturation. Removes nucleotide residues following the 3'-CCA terminus of tRNAs; can also add nucleotides to the ends of RNA molecules by using nucleoside diphosphates as substrates, but this may not be physiologically important. Probably plays a role in initiation of 16S rRNA degradation (leading to ribosome degradation) during starvation. In Rhodospirillum rubrum (strain ATCC 11170 / ATH 1.1.1 / DSM 467 / LMG 4362 / NCIMB 8255 / S1), this protein is Ribonuclease PH.